A 691-amino-acid polypeptide reads, in one-letter code: Pentatricopeptide repeat-containing protein At4g37170 (691 aa).

PPR repeat units lie at residues 84–118 (PAST…GFVP), 119–149 (GIVI…MPNR), 150–184 (DLCS…DSYS), 185–211 (WTAM…MQRV), 217–251 (NIFT…GLDS), 252–286 (DEVL…DVVS), 287–317 (WTSM…CERP), 318–352 (NEYT…GFDP), 353–383 (YSFA…CPKP), 384–418 (DLVS…GTKP), 419–449 (DHVT…ITEK), and 455–485 (TSDH…MPMK). The segment at 490 to 565 (LWASVLGGCS…RPGSSWTEIK (76 aa)) is type E motif. The interval 566-596 (RKRHVFIAADTSHPMYNQIVEFLRELRKKMK) is type E(+) motif. A type DYW motif region spans residues 597 to 691 (EEGYVPATSL…NGQCSCGDYW (95 aa)).

The protein belongs to the PPR family. PCMP-H subfamily.

This Arabidopsis thaliana (Mouse-ear cress) protein is Pentatricopeptide repeat-containing protein At4g37170 (PCMP-H5).